Consider the following 92-residue polypeptide: YcgL domain-containing protein SO_2575 (92 aa).

The region spanning 1–85 (MLCAVYKSSR…PQVNLLAEHR (85 aa)) is the YcgL domain.

This Shewanella oneidensis (strain ATCC 700550 / JCM 31522 / CIP 106686 / LMG 19005 / NCIMB 14063 / MR-1) protein is YcgL domain-containing protein SO_2575.